Here is a 247-residue protein sequence, read N- to C-terminus: UPF0246 protein LAF_1150 (247 aa).

The protein belongs to the UPF0246 family.

The sequence is that of UPF0246 protein LAF_1150 from Limosilactobacillus fermentum (strain NBRC 3956 / LMG 18251) (Lactobacillus fermentum).